Reading from the N-terminus, the 376-residue chain is Succinyl-diaminopimelate desuccinylase (376 aa).

His67 contacts Zn(2+). Asp69 is a catalytic residue. Position 100 (Asp100) interacts with Zn(2+). Residue Glu134 is the Proton acceptor of the active site. Residues Glu135, Glu163, and His349 each coordinate Zn(2+).

Belongs to the peptidase M20A family. DapE subfamily. As to quaternary structure, homodimer. Requires Zn(2+) as cofactor. The cofactor is Co(2+).

It catalyses the reaction N-succinyl-(2S,6S)-2,6-diaminopimelate + H2O = (2S,6S)-2,6-diaminopimelate + succinate. It functions in the pathway amino-acid biosynthesis; L-lysine biosynthesis via DAP pathway; LL-2,6-diaminopimelate from (S)-tetrahydrodipicolinate (succinylase route): step 3/3. In terms of biological role, catalyzes the hydrolysis of N-succinyl-L,L-diaminopimelic acid (SDAP), forming succinate and LL-2,6-diaminopimelate (DAP), an intermediate involved in the bacterial biosynthesis of lysine and meso-diaminopimelic acid, an essential component of bacterial cell walls. In Xanthomonas campestris pv. campestris (strain 8004), this protein is Succinyl-diaminopimelate desuccinylase.